We begin with the raw amino-acid sequence, 321 residues long: MIFATLEHILTHISFSIISIVIIIHLMNLLVYEIEELRNSLEKGMIATFSSITGFLVTRWISSGHFPLSNLYESLIFLSWSLSIIHIILYIRNYKNDLNAITAPSAIFTQGFATSGLSTEMHQPAILVPALQSQWLMMHVSMMLLSYAALLCGSLLSVALIVITFQKKTDFFLKNKNFYSLRKSFFFGNMEYLNEKGSILKKTSLLSFKNFYKYQLIQHLDSWSYRVISLGFTFLTIGILSGAVWANEAWGSYWNWDPKETWAFITWTIFAIYLHTRKNSKLQDQVTNSAFVASIGFLLIWICYFGINLLGIGFHSYGSFQ.

The next 8 helical transmembrane spans lie at 12–32, 45–62, 71–91, 98–117, 143–163, 227–247, 260–277, and 292–312; these read HISF…LLVY, MIAT…RWIS, LYES…ILYI, LNAI…TSGL, MLLS…LIVI, VISL…VWAN, ETWA…LHTR, and VASI…LLGI.

The protein belongs to the CcmF/CycK/Ccl1/NrfE/CcsA family. In terms of assembly, may interact with Ccs1.

It localises to the plastid. The protein resides in the chloroplast thylakoid membrane. Functionally, required during biogenesis of c-type cytochromes (cytochrome c6 and cytochrome f) at the step of heme attachment. The protein is Cytochrome c biogenesis protein CcsA of Phalaenopsis aphrodite subsp. formosana (Moth orchid).